A 195-amino-acid polypeptide reads, in one-letter code: UPF0157 protein BH1888 (195 aa).

The span at 1–12 shows a compositional bias: polar residues; that stretch reads MPPMKDSSNSTP. The interval 1-21 is disordered; the sequence is MPPMKDSSNSTPRTDEELQEV.

This sequence belongs to the UPF0157 (GrpB) family.

The chain is UPF0157 protein BH1888 from Halalkalibacterium halodurans (strain ATCC BAA-125 / DSM 18197 / FERM 7344 / JCM 9153 / C-125) (Bacillus halodurans).